We begin with the raw amino-acid sequence, 1241 residues long: ATP-dependent helicase/nuclease subunit A (1241 aa).

A UvrD-like helicase ATP-binding domain is found at 12 to 485 (SQWTDDQWKA…IDLAKNFRSR (474 aa)). 33–40 (AAAGSGKT) is a binding site for ATP. In terms of domain architecture, UvrD-like helicase C-terminal spans 505-805 (GEIDYDADAE…RIMTIHKSKG (301 aa)).

This sequence belongs to the helicase family. AddA subfamily. In terms of assembly, heterodimer of AddA and AddB/RexB. The cofactor is Mg(2+).

It carries out the reaction Couples ATP hydrolysis with the unwinding of duplex DNA by translocating in the 3'-5' direction.. The enzyme catalyses ATP + H2O = ADP + phosphate + H(+). Functionally, the heterodimer acts as both an ATP-dependent DNA helicase and an ATP-dependent, dual-direction single-stranded exonuclease. Recognizes the chi site generating a DNA molecule suitable for the initiation of homologous recombination. The AddA nuclease domain is required for chi fragment generation; this subunit has the helicase and 3' -&gt; 5' nuclease activities. The polypeptide is ATP-dependent helicase/nuclease subunit A (Bacillus cereus (strain ATCC 14579 / DSM 31 / CCUG 7414 / JCM 2152 / NBRC 15305 / NCIMB 9373 / NCTC 2599 / NRRL B-3711)).